The chain runs to 314 residues: Malate dehydrogenase (314 aa).

NAD(+) is bound by residues 11–16 (GSGNIG) and D35. Residues R84 and R90 each contribute to the substrate site. NAD(+) is bound by residues N97 and 120-122 (ITN). N122 and R153 together coordinate substrate. H177 functions as the Proton acceptor in the catalytic mechanism.

Belongs to the LDH/MDH superfamily. MDH type 3 family.

The enzyme catalyses (S)-malate + NAD(+) = oxaloacetate + NADH + H(+). Functionally, catalyzes the reversible oxidation of malate to oxaloacetate. This chain is Malate dehydrogenase, found in Rickettsia bellii (strain OSU 85-389).